A 301-amino-acid polypeptide reads, in one-letter code: Acetylglutamate kinase (301 aa).

Substrate contacts are provided by residues 68-69 (GG), R90, and N195.

It belongs to the acetylglutamate kinase family. ArgB subfamily.

The protein localises to the cytoplasm. The catalysed reaction is N-acetyl-L-glutamate + ATP = N-acetyl-L-glutamyl 5-phosphate + ADP. The protein operates within amino-acid biosynthesis; L-arginine biosynthesis; N(2)-acetyl-L-ornithine from L-glutamate: step 2/4. Its function is as follows. Catalyzes the ATP-dependent phosphorylation of N-acetyl-L-glutamate. The protein is Acetylglutamate kinase of Pseudomonas paraeruginosa (strain DSM 24068 / PA7) (Pseudomonas aeruginosa (strain PA7)).